The chain runs to 165 residues: MAGTALKRLMAEYKQLTLNPPEGIVAGPMNEENFFEWEALIMGPEDTCFEFGVFPAILSFPLDYPLSPPKMRFTCEMFHPNIYPDGRVCISILHAPGDDPMGYESSAERWSPVQSVEKILLSVVSMLAEPNDESGANVDASKMWRDDREQFYKVAKQIVQKSLGL.

A2 is subject to N-acetylalanine. The UBC core domain maps to 4-164; the sequence is TALKRLMAEY…AKQIVQKSLG (161 aa). C89 acts as the Glycyl thioester intermediate in catalysis.

The protein belongs to the ubiquitin-conjugating enzyme family. In terms of assembly, interacts with AUP1 (via C-terminus); the interaction recruits UBE2G2 to lipid droplets. Interacts with ubiquitin ligases AMFR/gp78 and RNF139/TRC8; recruitment to lipid droplets by AUP1 facilitates interaction of UBE2G2 with AMFR and RNF139, leading to sterol-induced ubiquitination of 3-hydroxy-3-methylglutaryl coenzyme A reductase and its subsequent proteasomal degradation.

The protein resides in the endoplasmic reticulum. Its subcellular location is the lipid droplet. The enzyme catalyses S-ubiquitinyl-[E1 ubiquitin-activating enzyme]-L-cysteine + [E2 ubiquitin-conjugating enzyme]-L-cysteine = [E1 ubiquitin-activating enzyme]-L-cysteine + S-ubiquitinyl-[E2 ubiquitin-conjugating enzyme]-L-cysteine.. It functions in the pathway protein modification; protein ubiquitination. In terms of biological role, accepts ubiquitin from the E1 complex and catalyzes its covalent attachment to other proteins. In vitro catalyzes 'Lys-48'-linked polyubiquitination. Involved in endoplasmic reticulum-associated degradation (ERAD). Required for sterol-induced ubiquitination of 3-hydroxy-3-methylglutaryl coenzyme A reductase and its subsequent proteasomal degradation. This is Ubiquitin-conjugating enzyme E2 G2 from Bos taurus (Bovine).